A 129-amino-acid polypeptide reads, in one-letter code: Small ribosomal subunit protein eS6 (129 aa).

This sequence belongs to the eukaryotic ribosomal protein eS6 family.

In Methanocorpusculum labreanum (strain ATCC 43576 / DSM 4855 / Z), this protein is Small ribosomal subunit protein eS6.